Consider the following 491-residue polypeptide: Subtilase-type proteinase RRT12 (491 aa).

The first 17 residues, 1–17 (MKPQCILISLLVNLAYA), serve as a signal peptide directing secretion. Residues N38, N64, N106, and N121 are each glycosylated (N-linked (GlcNAc...) asparagine). The Peptidase S8 domain occupies 142 to 442 (PFDVGDKDRY…FPRLNIEAIA (301 aa)). Active-site charge relay system residues include D174 and H205. 2 N-linked (GlcNAc...) asparagine glycosylation sites follow: N268 and N356. S365 acts as the Charge relay system in catalysis. N-linked (GlcNAc...) asparagine glycosylation occurs at N449.

This sequence belongs to the peptidase S8 family. Post-translationally, N-glycosylated.

It localises to the spore wall. In terms of biological role, subtilisin-related protease involved in the formation of a protective dityrosine layer required for spore wall assembly. Identified in a screen for mutants with increased levels of rDNA transcription. This is Subtilase-type proteinase RRT12 (RRT12) from Saccharomyces cerevisiae (strain ATCC 204508 / S288c) (Baker's yeast).